A 349-amino-acid polypeptide reads, in one-letter code: tRNA pseudouridine synthase D (349 aa).

Substrate is bound at residue Phe26. Asp79 (nucleophile) is an active-site residue. Asn128 contacts substrate. In terms of domain architecture, TRUD spans 154–302 (GVPNYFGSQR…VEGARRAILL (149 aa)). Phe328 is a binding site for substrate.

The protein belongs to the pseudouridine synthase TruD family.

The enzyme catalyses uridine(13) in tRNA = pseudouridine(13) in tRNA. Functionally, responsible for synthesis of pseudouridine from uracil-13 in transfer RNAs. This is tRNA pseudouridine synthase D from Yersinia enterocolitica serotype O:8 / biotype 1B (strain NCTC 13174 / 8081).